The sequence spans 271 residues: Ribosomal RNA small subunit methyltransferase J (271 aa).

S-adenosyl-L-methionine is bound by residues 116–117, 132–133, 168–169, and Asp-190; these read RD, ER, and SS.

Belongs to the methyltransferase superfamily. RsmJ family.

The protein localises to the cytoplasm. It carries out the reaction guanosine(1516) in 16S rRNA + S-adenosyl-L-methionine = N(2)-methylguanosine(1516) in 16S rRNA + S-adenosyl-L-homocysteine + H(+). In terms of biological role, specifically methylates the guanosine in position 1516 of 16S rRNA. In Shewanella piezotolerans (strain WP3 / JCM 13877), this protein is Ribosomal RNA small subunit methyltransferase J.